The primary structure comprises 494 residues: Probable cytosol aminopeptidase (494 aa).

Mn(2+) contacts are provided by lysine 264 and aspartate 269. The active site involves lysine 276. Mn(2+) contacts are provided by aspartate 287, aspartate 346, and glutamate 348. The active site involves arginine 350.

This sequence belongs to the peptidase M17 family. Requires Mn(2+) as cofactor.

Its subcellular location is the cytoplasm. It catalyses the reaction Release of an N-terminal amino acid, Xaa-|-Yaa-, in which Xaa is preferably Leu, but may be other amino acids including Pro although not Arg or Lys, and Yaa may be Pro. Amino acid amides and methyl esters are also readily hydrolyzed, but rates on arylamides are exceedingly low.. The catalysed reaction is Release of an N-terminal amino acid, preferentially leucine, but not glutamic or aspartic acids.. Functionally, presumably involved in the processing and regular turnover of intracellular proteins. Catalyzes the removal of unsubstituted N-terminal amino acids from various peptides. In Pasteurella multocida (strain Pm70), this protein is Probable cytosol aminopeptidase (pepA).